The primary structure comprises 80 residues: Translation initiation factor IF-1 (80 aa).

Positions 6–80 (RKQEHEKERG…LTRGRIVYRL (75 aa)) constitute an S1-like domain.

This sequence belongs to the IF-1 family. In terms of assembly, component of the 30S ribosomal translation pre-initiation complex which assembles on the 30S ribosome in the order IF-2 and IF-3, IF-1 and N-formylmethionyl-tRNA(fMet); mRNA recruitment can occur at any time during PIC assembly.

The protein localises to the cytoplasm. Its function is as follows. One of the essential components for the initiation of protein synthesis. Stabilizes the binding of IF-2 and IF-3 on the 30S subunit to which N-formylmethionyl-tRNA(fMet) subsequently binds. Helps modulate mRNA selection, yielding the 30S pre-initiation complex (PIC). Upon addition of the 50S ribosomal subunit IF-1, IF-2 and IF-3 are released leaving the mature 70S translation initiation complex. The protein is Translation initiation factor IF-1 of Aquifex aeolicus (strain VF5).